Here is a 994-residue protein sequence, read N- to C-terminus: MRSSAPMPRMSRRGRVTIGVLVGVFVLFTLLGWGVQAWTDWLWFGEVDYTAVFSGVLVTRLLLFVTVGLAMAVIVGGNLWLAHRLRPRLRPQSPEQATLERYRMLLSPRIGLWFATVSVVVGLFAGLSAQSRWSEWLLFRNGGNFGVKDPEFGVDIGFYIFDLPFWRYLLGTAFTAVVLALLGALAVHYVFGGIRLQGVGDRMSTAARAHLSTLVAVFVLLKAVAYVLDRRTMLLEYNDGANVYGAGYADINALLPAKEILAYISVVVAIAVLVFSNAWMRNLVWPGISLALLGVSAVAIGGIYPWAVQTFEVKPSARDKEARYIERSIEATRAAFSLGEADATRYAASNLQPPASLATDTAVVPNARLLDPQLVSETYTQLQQVRGFYDFGPKLDIDRYTVDGETQDYVVGVREINYGELTTQQSNWINRHTVYTHGYGLVAAPANRVVCGGQPYFVSGFLGERSQEGCAAQTDQIPASQPRIYYGERMEAGDYAIVGKANPEASPAEFDRPVGEDGSESYYTYTGSGGVEVGSFGRRLLYAIKEQESNFLLSEAVNEKSKLLYVRNPRERVEKVAPFLTVDGDPYPAVIDGRVTWIIDGYTTAATYPYAERINLQTETTDELTNRGTFQQARENINYIRNSVKATVDAYDGTVTLYEFDDGDPVLRAWNKAFGGDLIKPKAEIPTELSAHFRYPADLFKVQRNVYTRFHVTNPGDFYSGQDFWQVPNVPDAPDSGQKQPPYYLFTQMPGQDEPRFQLTSAVTPNRRQNLAALMSGSYVDGKPRLEVYELPEDTRISGPVQVHQQMTNNAQIRQQLNLLSSNQAQVQYGNLLSLPFGNGMLYVEPVYVKSNQQQAYPLLQKVLLSYGDGGSFVVLADNLTDGIKQLVEQGEQAGAPSPPPSDDETPPSPTPTPTPTTPSVTPPPLTGEVAEAAQRVQAAIVELRAAQESGDFERYGRALQALDEATAAFEQAAASTPAATPTAAPTGSPSPGG.

Helical transmembrane passes span I18–W38, L61–L81, I110–Q130, F174–I194, A209–D229, I260–M280, and L283–I303. 2 disordered regions span residues G891 to A934 and F970 to G994. Residues P897–L926 show a composition bias toward pro residues.

Belongs to the UPF0182 family.

The protein localises to the cell membrane. In Salinispora tropica (strain ATCC BAA-916 / DSM 44818 / JCM 13857 / NBRC 105044 / CNB-440), this protein is UPF0182 protein Strop_3729.